Reading from the N-terminus, the 182-residue chain is Ribosome-recycling factor (182 aa).

Belongs to the RRF family.

The protein resides in the cytoplasm. Responsible for the release of ribosomes from messenger RNA at the termination of protein biosynthesis. May increase the efficiency of translation by recycling ribosomes from one round of translation to another. This is Ribosome-recycling factor from Prochlorococcus marinus subsp. pastoris (strain CCMP1986 / NIES-2087 / MED4).